Reading from the N-terminus, the 117-residue chain is Large ribosomal subunit protein eL8 (117 aa).

It belongs to the eukaryotic ribosomal protein eL8 family. As to quaternary structure, part of the 50S ribosomal subunit. Probably part of the RNase P complex.

The protein resides in the cytoplasm. Its function is as follows. Multifunctional RNA-binding protein that recognizes the K-turn motif in ribosomal RNA, the RNA component of RNase P, box H/ACA, box C/D and box C'/D' sRNAs. The sequence is that of Large ribosomal subunit protein eL8 from Methanocaldococcus jannaschii (strain ATCC 43067 / DSM 2661 / JAL-1 / JCM 10045 / NBRC 100440) (Methanococcus jannaschii).